A 309-amino-acid polypeptide reads, in one-letter code: MILTVTLNPAIDVSYPLDELKCDTVNRVVDVTKTPGGKGLNVCRVLNEFGETVKATGCIGGESGDFIINHLPDSILSRFYKISGYTRTCIAILHEGNQTEILEKGPMLSVDEIDGFTHHFKYLLNDVDVVTLSGSLPAGMPDDYYQKLIGIANLNGKKTVLDCSGNALEAVLKGDSKPTVIKPNLEELSQLLGKEMTKDFKALKAVLQDELFEGIEWIIVSLGADGVFAKHKDTFYNVDIPKIKIVSAVGSGDSTVAGIASGLANDEDDRALLTKANVLGMLNAQEKTTGHVNMANYDKLYQSIKVKEV.

Belongs to the carbohydrate kinase PfkB family. LacC subfamily.

The catalysed reaction is D-tagatofuranose 6-phosphate + ATP = D-tagatofuranose 1,6-bisphosphate + ADP + H(+). The protein operates within carbohydrate metabolism; D-tagatose 6-phosphate degradation; D-glyceraldehyde 3-phosphate and glycerone phosphate from D-tagatose 6-phosphate: step 1/2. The polypeptide is Tagatose-6-phosphate kinase (Streptococcus pyogenes serotype M3 (strain SSI-1)).